A 649-amino-acid polypeptide reads, in one-letter code: Lipolysis-stimulated lipoprotein receptor (649 aa).

The segment covering 1–16 has biased composition (gly residues); the sequence is MQQDGLGVGTRNGSGK. A disordered region spans residues 1 to 21; it reads MQQDGLGVGTRNGSGKGRSVH. Topologically, residues 1–259 are extracellular; the sequence is MQQDGLGVGT…PGFQAGPIED (259 aa). Positions 86–234 constitute an Ig-like V-type domain; it reads PARAIQVTVS…DLQGNNEAYA (149 aa). A disulfide bridge connects residues C111 and C218. Residues 260–280 traverse the membrane as a helical segment; that stretch reads WLFVVVVCLAAFLIFLLLGIC. Over 281-649 the chain is Cytoplasmic; the sequence is WCQCCPHTCC…LALSRESLVV (369 aa). Residue T336 is modified to Phosphothreonine. Phosphoserine occurs at positions 365, 371, 389, 432, and 436. Residues 414–649 are disordered; that stretch reads NFDPSRPGPP…LALSRESLVV (236 aa). Over residues 426–444 the composition is skewed to basic and acidic residues; that stretch reads RVERAMSEVTSLHEDDWRS. T453 is modified (phosphothreonine). Residues S464, S467, and S493 each carry the phosphoserine modification. At T501 the chain carries Phosphothreonine. Polar residues predominate over residues 502-518; the sequence is PPSTAESGSRSPTSNGG. 2 positions are modified to phosphoserine: S528 and S530. A compositionally biased stretch (basic and acidic residues) spans 529 to 565; sequence RSRDDLYDQDDSRDFPRSRDPHYDDFRSRERPPADPR. Y535 bears the Phosphotyrosine mark. Phosphoserine occurs at positions 540 and 579. A compositionally biased stretch (basic and acidic residues) spans 589–609; that stretch reads RLLEEAVRKKGSEERRRPHKE. At S631 the chain carries Phosphoserine. A Glycyl lysine isopeptide (Lys-Gly) (interchain with G-Cter in ubiquitin) cross-link involves residue K638. Residues S643 and S646 each carry the phosphoserine modification.

Belongs to the immunoglobulin superfamily. LISCH7 family. Homotrimer or homotetramer. Assembles into cell-cell contacts. Interacts (via the cytoplasmic domain) with MARVELD2 (via C-terminal cytoplasmic domain); the interaction is required to recruit MARVELD2 to tricellular contacts. Interacts with OCLN. Phosphorylation at Ser-365 by MAPK8/JNK1 and MAPK9/JNK2 may be required for exclusive localization at tricellular tight junstions. Post-translationally, polyubiquitinated at Lys-638 via 'Lys-63'-linked ubiquitin chains; deubiquitinated by USP53.

The protein localises to the cell membrane. The protein resides in the cell junction. It is found in the tight junction. Its function is as follows. Probable role in the clearance of triglyceride-rich lipoprotein from blood. Binds chylomicrons, LDL and VLDL in presence of free fatty acids and allows their subsequent uptake in the cells. Maintains epithelial barrier function by recruiting MARVELD2/tricellulin to tricellular tight junctions. This is Lipolysis-stimulated lipoprotein receptor from Homo sapiens (Human).